A 378-amino-acid chain; its full sequence is Putative UDP-N-acetylglucosamine 2-epimerase (378 aa).

The protein belongs to the UDP-N-acetylglucosamine 2-epimerase family.

Its subcellular location is the cytoplasm. The catalysed reaction is UDP-N-acetyl-alpha-D-glucosamine = UDP-N-acetyl-alpha-D-mannosamine. In Thermotoga maritima (strain ATCC 43589 / DSM 3109 / JCM 10099 / NBRC 100826 / MSB8), this protein is Putative UDP-N-acetylglucosamine 2-epimerase.